Consider the following 255-residue polypeptide: 4-hydroxy-tetrahydrodipicolinate reductase (255 aa).

Residues 9 to 14 (GFKGKM), D35, 89 to 91 (GTT), and 115 to 118 (APNF) contribute to the NAD(+) site. The active-site Proton donor/acceptor is the H145. H146 is a binding site for (S)-2,3,4,5-tetrahydrodipicolinate. The Proton donor role is filled by K149. 155-156 (GT) serves as a coordination point for (S)-2,3,4,5-tetrahydrodipicolinate.

The protein belongs to the DapB family.

The protein resides in the cytoplasm. It catalyses the reaction (S)-2,3,4,5-tetrahydrodipicolinate + NAD(+) + H2O = (2S,4S)-4-hydroxy-2,3,4,5-tetrahydrodipicolinate + NADH + H(+). It carries out the reaction (S)-2,3,4,5-tetrahydrodipicolinate + NADP(+) + H2O = (2S,4S)-4-hydroxy-2,3,4,5-tetrahydrodipicolinate + NADPH + H(+). The protein operates within amino-acid biosynthesis; L-lysine biosynthesis via DAP pathway; (S)-tetrahydrodipicolinate from L-aspartate: step 4/4. In terms of biological role, catalyzes the conversion of 4-hydroxy-tetrahydrodipicolinate (HTPA) to tetrahydrodipicolinate. This Streptococcus pneumoniae (strain 70585) protein is 4-hydroxy-tetrahydrodipicolinate reductase.